The primary structure comprises 381 residues: Dynactin subunit 2 (381 aa).

The segment at 15-39 (DQPDVYETPDAPESETSDFYDEEPA) is disordered. Residues 24 to 39 (DAPESETSDFYDEEPA) show a composition bias toward acidic residues. 2 coiled-coil regions span residues 100 to 216 (QKCL…AVGA) and 350 to 381 (GVQE…EKVK).

This sequence belongs to the dynactin subunit 2 family. In terms of assembly, subunit of dynactin, a multiprotein complex associated with dynein.

It is found in the cytoplasm. Its subcellular location is the cytoskeleton. The protein resides in the membrane. Its function is as follows. Modulates cytoplasmic dynein binding to an organelle, and plays a role in prometaphase chromosome alignment and spindle organization during mitosis. This chain is Dynactin subunit 2, found in Aedes aegypti (Yellowfever mosquito).